Reading from the N-terminus, the 129-residue chain is uncharacterized protein (129 aa).

Helical transmembrane passes span 22–42, 55–75, and 88–108; these read LASS…FFFF, VGSF…FFFF, and LPFT…FFFF.

The protein localises to the membrane. This is an uncharacterized protein from Saccharomyces cerevisiae (strain ATCC 204508 / S288c) (Baker's yeast).